A 336-amino-acid chain; its full sequence is USG-1 protein homolog (336 aa).

This sequence belongs to the aspartate-semialdehyde dehydrogenase family.

This chain is USG-1 protein homolog (usg), found in Pseudomonas aeruginosa (strain ATCC 15692 / DSM 22644 / CIP 104116 / JCM 14847 / LMG 12228 / 1C / PRS 101 / PAO1).